The sequence spans 192 residues: Leucine-rich repeat-containing protein 51 (192 aa).

LRR repeat units follow at residues S49–V71, N80–F101, and N103–A124. The region spanning N137 to W175 is the LRRCT domain.

Its subcellular location is the cytoplasm. The sequence is that of Leucine-rich repeat-containing protein 51 from Rattus norvegicus (Rat).